Here is a 511-residue protein sequence, read N- to C-terminus: ADP,ATP carrier protein 4 (511 aa).

A run of 12 helical transmembrane segments spans residues 34–54 (VSKF…QNLI), 70–90 (IISF…TAIY), 102–122 (IFYL…YVIF), 157–177 (FSLF…LLFW), 192–212 (FYPL…QFLE), 231–251 (FHTL…IIAI), 296–316 (LIAT…GPWK), 330–350 (AAFI…FVVL), 361–381 (FTAA…FFAV), 390–410 (LIIA…IGAI), 453–473 (LGKS…PSAS), and 476–496 (SIST…LWAT).

Belongs to the ADP/ATP translocase tlc family.

The protein resides in the cell membrane. In terms of biological role, provides the rickettsial cell with host ATP in exchange for rickettsial ADP. This is an obligate exchange system. This energy acquiring activity is an important component of rickettsial parasitism. This chain is ADP,ATP carrier protein 4 (tlcD), found in Rickettsia conorii (strain ATCC VR-613 / Malish 7).